The following is a 540-amino-acid chain: tRNA-2-methylthio-N(6)-dimethylallyladenosine synthase (540 aa).

One can recognise an MTTase N-terminal domain in the interval 4-120 (RSYEVRTFGC…LPVLLERARH (117 aa)). Cysteine 13, cysteine 49, cysteine 83, cysteine 157, cysteine 161, and cysteine 164 together coordinate [4Fe-4S] cluster. The Radical SAM core domain occupies 143–374 (RASHHSAWVS…ALQDEISWAE (232 aa)). The TRAM domain maps to 376-468 (RALVGRRVEV…PHHLTADGPL (93 aa)). Residues 480–540 (WALGRDGDGG…ADACCTPVRR (61 aa)) form a disordered region. Low complexity-rich tracts occupy residues 492–502 (AAAQQPADGRP) and 520–533 (GPASADAASAGADA).

It belongs to the methylthiotransferase family. MiaB subfamily. Monomer. [4Fe-4S] cluster serves as cofactor.

Its subcellular location is the cytoplasm. It carries out the reaction N(6)-dimethylallyladenosine(37) in tRNA + (sulfur carrier)-SH + AH2 + 2 S-adenosyl-L-methionine = 2-methylsulfanyl-N(6)-dimethylallyladenosine(37) in tRNA + (sulfur carrier)-H + 5'-deoxyadenosine + L-methionine + A + S-adenosyl-L-homocysteine + 2 H(+). Its function is as follows. Catalyzes the methylthiolation of N6-(dimethylallyl)adenosine (i(6)A), leading to the formation of 2-methylthio-N6-(dimethylallyl)adenosine (ms(2)i(6)A) at position 37 in tRNAs that read codons beginning with uridine. This Frankia casuarinae (strain DSM 45818 / CECT 9043 / HFP020203 / CcI3) protein is tRNA-2-methylthio-N(6)-dimethylallyladenosine synthase.